Here is a 239-residue protein sequence, read N- to C-terminus: Tetraspanin-9 (239 aa).

Over 1–13 (MARGCLCCLKYMM) the chain is Cytoplasmic. Residues 14 to 34 (FLFNLIFWLCGCGLLGVGIWL) form a helical membrane-spanning segment. At 35–55 (SVSQGNFATFSPSFPSLSAAN) the chain is on the extracellular side. The helical transmembrane segment at 56 to 76 (LVIVIGTVVMVTGFLGCLGAI) threads the bilayer. At 77 to 85 (KENKCLLLS) the chain is on the cytoplasmic side. The helical transmembrane segment at 86-106 (FFIILLIILLTELILLILFFV) threads the bilayer. Residues 107 to 203 (YMDKVNENAK…VKMWFDDNKH (97 aa)) lie on the Extracellular side of the membrane. Asn180 carries an N-linked (GlcNAc...) asparagine glycan. Residues 204–224 (VLGTIGMCILIIQILGMAFSM) form a helical membrane-spanning segment. At 225-239 (TLFQQIHRTGKKYDA) the chain is on the cytoplasmic side.

Belongs to the tetraspanin (TM4SF) family.

Its subcellular location is the membrane. The sequence is that of Tetraspanin-9 (tspan9) from Xenopus laevis (African clawed frog).